The primary structure comprises 934 residues: AP-2 complex subunit alpha (934 aa).

A disordered region spans residues R623–T670. The segment covering P636 to H645 has biased composition (polar residues). The span at S646 to S663 shows a compositional bias: low complexity.

Belongs to the adapter complexes large subunit family. As to quaternary structure, adaptor protein complex 2 (AP-2) is a heterotetramer composed of two large adaptins (alpha-type and beta-type subunits), a medium adaptin (mu-type subunit AP50) and a small adaptin (sigma-type subunit AP17).

It is found in the cell membrane. It localises to the membrane. Its subcellular location is the coated pit. Its function is as follows. Adaptins are components of the adapter complexes which link clathrin to receptors in coated vesicles. Clathrin-associated protein complexes are believed to interact with the cytoplasmic tails of membrane proteins, leading to their selection and concentration. Alpha adaptin is a subunit of the plasma membrane adapter. The chain is AP-2 complex subunit alpha from Anopheles gambiae (African malaria mosquito).